The following is a 529-amino-acid chain: Bifunctional purine biosynthesis protein PurH (529 aa).

The region spanning 1-148 is the MGS-like domain; it reads MQQRRPVRRA…KNHKDVAIVV (148 aa).

The protein belongs to the PurH family.

It carries out the reaction (6R)-10-formyltetrahydrofolate + 5-amino-1-(5-phospho-beta-D-ribosyl)imidazole-4-carboxamide = 5-formamido-1-(5-phospho-D-ribosyl)imidazole-4-carboxamide + (6S)-5,6,7,8-tetrahydrofolate. The catalysed reaction is IMP + H2O = 5-formamido-1-(5-phospho-D-ribosyl)imidazole-4-carboxamide. It participates in purine metabolism; IMP biosynthesis via de novo pathway; 5-formamido-1-(5-phospho-D-ribosyl)imidazole-4-carboxamide from 5-amino-1-(5-phospho-D-ribosyl)imidazole-4-carboxamide (10-formyl THF route): step 1/1. The protein operates within purine metabolism; IMP biosynthesis via de novo pathway; IMP from 5-formamido-1-(5-phospho-D-ribosyl)imidazole-4-carboxamide: step 1/1. This chain is Bifunctional purine biosynthesis protein PurH, found in Citrobacter koseri (strain ATCC BAA-895 / CDC 4225-83 / SGSC4696).